A 418-amino-acid chain; its full sequence is Phospho-N-acetylmuramoyl-pentapeptide-transferase (418 aa).

The next 10 helical transmembrane spans lie at tyrosine 22 to glycine 42, threonine 72 to alanine 92, serine 95 to isoleucine 115, isoleucine 135 to isoleucine 155, alanine 208 to glycine 228, alanine 244 to alanine 264, leucine 277 to phenylalanine 297, phenylalanine 302 to isoleucine 322, leucine 326 to valine 346, and lysine 395 to leucine 415.

The protein belongs to the glycosyltransferase 4 family. MraY subfamily. It depends on Mg(2+) as a cofactor.

It is found in the cell inner membrane. The enzyme catalyses UDP-N-acetyl-alpha-D-muramoyl-L-alanyl-gamma-D-glutamyl-meso-2,6-diaminopimeloyl-D-alanyl-D-alanine + di-trans,octa-cis-undecaprenyl phosphate = di-trans,octa-cis-undecaprenyl diphospho-N-acetyl-alpha-D-muramoyl-L-alanyl-D-glutamyl-meso-2,6-diaminopimeloyl-D-alanyl-D-alanine + UMP. Its pathway is cell wall biogenesis; peptidoglycan biosynthesis. Functionally, catalyzes the initial step of the lipid cycle reactions in the biosynthesis of the cell wall peptidoglycan: transfers peptidoglycan precursor phospho-MurNAc-pentapeptide from UDP-MurNAc-pentapeptide onto the lipid carrier undecaprenyl phosphate, yielding undecaprenyl-pyrophosphoryl-MurNAc-pentapeptide, known as lipid I. The polypeptide is Phospho-N-acetylmuramoyl-pentapeptide-transferase (Azobacteroides pseudotrichonymphae genomovar. CFP2).